The primary structure comprises 137 residues: Large ribosomal subunit protein uL16 (137 aa).

The protein belongs to the universal ribosomal protein uL16 family. In terms of assembly, part of the 50S ribosomal subunit.

Functionally, binds 23S rRNA and is also seen to make contacts with the A and possibly P site tRNAs. This chain is Large ribosomal subunit protein uL16, found in Streptococcus pyogenes serotype M1.